Here is a 602-residue protein sequence, read N- to C-terminus: Elongation factor 4 (602 aa).

The tr-type G domain occupies 7–189 (KYIRNFSIVA…AIVNKVPAPD (183 aa)). Residues 19-24 (DHGKST) and 136-139 (NKID) each bind GTP.

It belongs to the TRAFAC class translation factor GTPase superfamily. Classic translation factor GTPase family. LepA subfamily.

The protein localises to the cell membrane. It catalyses the reaction GTP + H2O = GDP + phosphate + H(+). Its function is as follows. Required for accurate and efficient protein synthesis under certain stress conditions. May act as a fidelity factor of the translation reaction, by catalyzing a one-codon backward translocation of tRNAs on improperly translocated ribosomes. Back-translocation proceeds from a post-translocation (POST) complex to a pre-translocation (PRE) complex, thus giving elongation factor G a second chance to translocate the tRNAs correctly. Binds to ribosomes in a GTP-dependent manner. In Clostridium botulinum (strain Kyoto / Type A2), this protein is Elongation factor 4.